We begin with the raw amino-acid sequence, 142 residues long: Acetyltransferase SG1711 (142 aa).

The 142-residue stretch at 1 to 142 (MEIRVFRHDD…GKRLIEDQEY (142 aa)) folds into the N-acetyltransferase domain.

Belongs to the acetyltransferase family. YpeA subfamily.

This Sodalis glossinidius (strain morsitans) protein is Acetyltransferase SG1711.